Here is a 393-residue protein sequence, read N- to C-terminus: FAD-dependent monooxygenase dbaB (393 aa).

The signal sequence occupies residues 1–23 (MTRTSPTLPVIILGAGMVGLTLA). 2 residues coordinate FAD: Glu-37 and Arg-107. N-linked (GlcNAc...) asparagine glycosylation occurs at Asn-128. Tyr-221 is an active-site residue. N-linked (GlcNAc...) asparagine glycosylation occurs at Asn-233. Asp-320 is an FAD binding site.

It belongs to the paxM FAD-dependent monooxygenase family. FAD serves as cofactor.

The protein operates within secondary metabolite biosynthesis. Its function is as follows. FAD-dependent monooxygenase; part of the gene cluster that mediates the biosynthesis of the antibiotic 2,4-dihydroxy-3-methyl-6-(2-oxopropyl)benzaldehyde (DHMBA) and its derivatives. The direct non-reducing polyketide synthase dbaI product is 2,4-dihydroxy-3-methyl-6-(2-oxopropyl)benzaldehyde (DHMBA), produced by condensation of one acetyl-CoA starter unit with 4 malonyl-CoA units and one methylation step. The FAD-dependent monooxygenase dbaH is responsible for the synthesis of yellow pigments derived from the oxidation of DHMBA. The roles of dbaB, C, E and F have still to be determined. The chain is FAD-dependent monooxygenase dbaB from Emericella nidulans (strain FGSC A4 / ATCC 38163 / CBS 112.46 / NRRL 194 / M139) (Aspergillus nidulans).